The chain runs to 1367 residues: Probable serine/threonine-protein kinase pkgA (1367 aa).

Disordered regions lie at residues 140-164 (IDEN…NKTI), 264-429 (KNGK…LLSR), 456-556 (PTPL…SRKP), and 771-792 (PREE…SDPV). A compositionally biased stretch (low complexity) spans 143 to 162 (NNNNNNNNNNNNNNNNNKNK). Pro residues predominate over residues 271–282 (IKRPSPPLPPPQ). Basic and acidic residues predominate over residues 287-326 (EQQKEQKEQQKEQQKEQQKEQQKEQEQKQQEPQKYVKFEI). The span at 340 to 381 (ISSSNISNEISKQQQQQQQQQQQQQQQQQQQQQQQQQQQQQQ) shows a compositional bias: low complexity. Over residues 399–421 (ANNNILTTPLSSQPTQSLETPST) the composition is skewed to polar residues. The span at 506-517 (GEDEEEDEDDDN) shows a compositional bias: acidic residues. Basic residues predominate over residues 531–544 (LKNKRPFKKTHVHH). Residues 810 to 1236 (FEFIKPITKG…AEEIKSHPFF (427 aa)) enclose the Protein kinase domain. ATP contacts are provided by residues 816-824 (ITKGGYGKV) and Lys839. Asp933 acts as the Proton acceptor in catalysis. Disordered regions lie at residues 971–1034 (FSPT…PSNT), 1084–1134 (FIPP…HNIH), and 1288–1312 (QNQN…TATA). A compositionally biased stretch (low complexity) spans 979-1015 (NNQSSSSSSVSNIGGSNTIGSNISSTNNNNNNNNTTG). Positions 1025–1034 (NTETPIPSNT) are enriched in polar residues. Composition is skewed to low complexity over residues 1092-1125 (QQPI…QQTT) and 1294-1312 (SSTI…TATA). The 111-residue stretch at 1237–1347 (KSINWKTILT…VNFQSLLELN (111 aa)) folds into the AGC-kinase C-terminal domain.

It belongs to the protein kinase superfamily. AGC Ser/Thr protein kinase family.

It carries out the reaction L-seryl-[protein] + ATP = O-phospho-L-seryl-[protein] + ADP + H(+). The enzyme catalyses L-threonyl-[protein] + ATP = O-phospho-L-threonyl-[protein] + ADP + H(+). The protein is Probable serine/threonine-protein kinase pkgA (pkgA) of Dictyostelium discoideum (Social amoeba).